Consider the following 1108-residue polypeptide: Alpha-mannosidase 2 (1108 aa).

Over 1-9 (MLRIRRRFA) the chain is Cytoplasmic. The chain crosses the membrane as a helical; Signal-anchor for type II membrane protein span at residues 10–30 (LVICSGCLLVFLSLYIILNFA). The Lumenal segment spans residues 31–1108 (APAATQIKPN…TAAYVSSHSS (1078 aa)). The tract at residues 70-92 (AETSNRDDPIRPPLKVARSPRPG) is disordered. Zn(2+) is bound by residues His-153, Asp-155, Asp-267, and His-534. Residue Asp-267 is the Nucleophile of the active site.

The protein belongs to the glycosyl hydrolase 38 family. Homodimer; disulfide-linked. Zn(2+) is required as a cofactor.

Its subcellular location is the golgi apparatus membrane. It catalyses the reaction N(4)-{beta-D-GlcNAc-(1-&gt;2)-alpha-D-Man-(1-&gt;3)-[alpha-D-Man-(1-&gt;3)-[alpha-D-Man-(1-&gt;6)]-alpha-D-Man-(1-&gt;6)]-beta-D-Man-(1-&gt;4)-beta-D-GlcNAc-(1-&gt;4)-beta-D-GlcNAc}-L-asparaginyl-[protein] + 2 H2O = 2 alpha-D-mannopyranose + an N(4)-{beta-D-GlcNAc-(1-&gt;2)-alpha-D-Man-(1-&gt;3)-[alpha-D-Man-(1-&gt;6)]-beta-D-Man-(1-&gt;4)-beta-D-GlcNAc-(1-&gt;4)-beta-D-GlcNAc}-L-asparaginyl-[protein]. It functions in the pathway protein modification; protein glycosylation. Its function is as follows. Catalyzes the first committed step in the biosynthesis of complex N-glycans. It controls conversion of high mannose to complex N-glycans; the final hydrolytic step in the N-glycan maturation pathway. This chain is Alpha-mannosidase 2, found in Drosophila melanogaster (Fruit fly).